We begin with the raw amino-acid sequence, 121 residues long: Protein CHLORORESPIRATORY REDUCTION 42, chloroplastic (121 aa).

Biogenesis factor component of the plastidial NDH subcomplex A.

It is found in the plastid. The protein localises to the chloroplast. It localises to the chloroplast stroma. Its function is as follows. Required for both formation and activity of the chloroplast NAD(P)H dehydrogenase (NDH) complex of the photosynthetic electron transport chain. Functions in assembly or stabilization of the NDH complex; probably involved, together with CRR1 and CRR6, in the incorporation of NdhJ, NdhM, NdhK and NdhI into the NDH subcomplex A assembly intermediate (NAI500) to produce the complex NAI400. The sequence is that of Protein CHLORORESPIRATORY REDUCTION 42, chloroplastic from Arabidopsis thaliana (Mouse-ear cress).